The sequence spans 175 residues: Nucleoside triphosphate/diphosphate phosphatase (175 aa).

Arg23 acts as the Proton donor in catalysis. 6 residues coordinate Mg(2+): Asn87, Asp103, Asp105, Asp107, Asp120, and Glu123.

This sequence belongs to the Ntdp family. It depends on Mg(2+) as a cofactor.

The enzyme catalyses a ribonucleoside 5'-triphosphate + H2O = a ribonucleoside 5'-diphosphate + phosphate + H(+). It catalyses the reaction a ribonucleoside 5'-diphosphate + H2O = a ribonucleoside 5'-phosphate + phosphate + H(+). Has nucleoside phosphatase activity towards nucleoside triphosphates and nucleoside diphosphates. The sequence is that of Nucleoside triphosphate/diphosphate phosphatase from Listeria innocua serovar 6a (strain ATCC BAA-680 / CLIP 11262).